The following is a 354-amino-acid chain: Molybdenum import ATP-binding protein ModC (354 aa).

One can recognise an ABC transporter domain in the interval Met-1–Glu-229. Position 31–38 (Gly-31–Thr-38) interacts with ATP. In terms of domain architecture, Mop spans Gly-289–Leu-354.

It belongs to the ABC transporter superfamily. Molybdate importer (TC 3.A.1.8) family. In terms of assembly, the complex is composed of two ATP-binding proteins (ModC), two transmembrane proteins (ModB) and a solute-binding protein (ModA).

Its subcellular location is the cell inner membrane. The enzyme catalyses molybdate(out) + ATP + H2O = molybdate(in) + ADP + phosphate + H(+). In terms of biological role, part of the ABC transporter complex ModABC involved in molybdenum import. Responsible for energy coupling to the transport system. The sequence is that of Molybdenum import ATP-binding protein ModC from Photorhabdus laumondii subsp. laumondii (strain DSM 15139 / CIP 105565 / TT01) (Photorhabdus luminescens subsp. laumondii).